The following is a 100-amino-acid chain: Urease subunit gamma 1 (100 aa).

Belongs to the urease gamma subunit family. Heterotrimer of UreA (gamma), UreB (beta) and UreC (alpha) subunits. Three heterotrimers associate to form the active enzyme.

The protein localises to the cytoplasm. It catalyses the reaction urea + 2 H2O + H(+) = hydrogencarbonate + 2 NH4(+). Its pathway is nitrogen metabolism; urea degradation; CO(2) and NH(3) from urea (urease route): step 1/1. Disruption of the ure1 gene cluster suggests that it protects brucellae during their passage through the stomach. The major route of infection in human brucellosis is oral. The chain is Urease subunit gamma 1 from Brucella abortus (strain 2308).